Consider the following 295-residue polypeptide: Transcriptional regulator SirC (295 aa).

One can recognise an HTH araC/xylS-type domain in the interval 195–292; sequence EKVYNIIISD…KITPLSFMRT (98 aa). 2 consecutive DNA-binding regions (H-T-H motif) follow at residues 212–233 and 259–282; these read AEVAGKLFMSVSSLKRKLAAEE and ISQVATMCGYDTPSYFIAIFKRHF.

Its function is as follows. Positive regulator of the expression of the invasion-associated type III secretion system encoded within SPI-1 (pathogenicity island 1). The protein is Transcriptional regulator SirC (sirC) of Salmonella typhi.